The chain runs to 336 residues: 4-hydroxy-3-methylbut-2-enyl diphosphate reductase (336 aa).

The segment at 1-23 (MFGQRLDTLGAMSSSVSSPSPET) is disordered. Cysteine 36 lines the [4Fe-4S] cluster pocket. Residues histidine 65 and histidine 98 each coordinate (2E)-4-hydroxy-3-methylbut-2-enyl diphosphate. Dimethylallyl diphosphate is bound by residues histidine 65 and histidine 98. Positions 65 and 98 each coordinate isopentenyl diphosphate. Cysteine 120 provides a ligand contact to [4Fe-4S] cluster. Residue histidine 148 coordinates (2E)-4-hydroxy-3-methylbut-2-enyl diphosphate. Residue histidine 148 coordinates dimethylallyl diphosphate. Histidine 148 contacts isopentenyl diphosphate. The active-site Proton donor is the glutamate 150. Threonine 190 contacts (2E)-4-hydroxy-3-methylbut-2-enyl diphosphate. Position 220 (cysteine 220) interacts with [4Fe-4S] cluster. Serine 248, serine 249, asparagine 250, and serine 293 together coordinate (2E)-4-hydroxy-3-methylbut-2-enyl diphosphate. The dimethylallyl diphosphate site is built by serine 248, serine 249, asparagine 250, and serine 293. Positions 248, 249, 250, and 293 each coordinate isopentenyl diphosphate.

This sequence belongs to the IspH family. Requires [4Fe-4S] cluster as cofactor.

The enzyme catalyses isopentenyl diphosphate + 2 oxidized [2Fe-2S]-[ferredoxin] + H2O = (2E)-4-hydroxy-3-methylbut-2-enyl diphosphate + 2 reduced [2Fe-2S]-[ferredoxin] + 2 H(+). It catalyses the reaction dimethylallyl diphosphate + 2 oxidized [2Fe-2S]-[ferredoxin] + H2O = (2E)-4-hydroxy-3-methylbut-2-enyl diphosphate + 2 reduced [2Fe-2S]-[ferredoxin] + 2 H(+). It functions in the pathway isoprenoid biosynthesis; dimethylallyl diphosphate biosynthesis; dimethylallyl diphosphate from (2E)-4-hydroxy-3-methylbutenyl diphosphate: step 1/1. Its pathway is isoprenoid biosynthesis; isopentenyl diphosphate biosynthesis via DXP pathway; isopentenyl diphosphate from 1-deoxy-D-xylulose 5-phosphate: step 6/6. Its function is as follows. Catalyzes the conversion of 1-hydroxy-2-methyl-2-(E)-butenyl 4-diphosphate (HMBPP) into a mixture of isopentenyl diphosphate (IPP) and dimethylallyl diphosphate (DMAPP). Acts in the terminal step of the DOXP/MEP pathway for isoprenoid precursor biosynthesis. The protein is 4-hydroxy-3-methylbut-2-enyl diphosphate reductase of Corynebacterium efficiens (strain DSM 44549 / YS-314 / AJ 12310 / JCM 11189 / NBRC 100395).